Reading from the N-terminus, the 252-residue chain is uncharacterized protein (252 aa).

The next 6 membrane-spanning stretches (helical) occupy residues 5–25, 29–49, 61–81, 141–161, 179–199, and 217–237; these read LTSLITQSLTFSILIVGIVSF, LALVGLLLPGIVFMATLGTFI, IAGIIGCLLGDWCSYFIGLYF, ILPSLLGCILWPPIYFFPGII, WLLLIIAILIWFGIWLTSKWW, and IGWIALIILSSGIIGLILIQF.

This sequence belongs to the DedA family.

The protein resides in the cell membrane. This is an uncharacterized protein from Buchnera aphidicola subsp. Schizaphis graminum (strain Sg).